The primary structure comprises 1391 residues: DNA-directed RNA polymerase subunit beta (1391 aa).

Belongs to the RNA polymerase beta chain family. As to quaternary structure, the RNAP catalytic core consists of 2 alpha, 1 beta, 1 beta' and 1 omega subunit. When a sigma factor is associated with the core the holoenzyme is formed, which can initiate transcription.

It carries out the reaction RNA(n) + a ribonucleoside 5'-triphosphate = RNA(n+1) + diphosphate. Its function is as follows. DNA-dependent RNA polymerase catalyzes the transcription of DNA into RNA using the four ribonucleoside triphosphates as substrates. The protein is DNA-directed RNA polymerase subunit beta of Paramagnetospirillum magneticum (strain ATCC 700264 / AMB-1) (Magnetospirillum magneticum).